The sequence spans 186 residues: Putative glutathione-dependent formaldehyde-activating enzyme (186 aa).

The region spanning 20-166 (FSGGKLRCKC…FKSIGLETYD (147 aa)) is the CENP-V/GFA domain. Zn(2+) contacts are provided by cysteine 27, cysteine 29, cysteine 48, cysteine 50, cysteine 53, cysteine 95, and cysteine 98.

It belongs to the Gfa family. Zn(2+) serves as cofactor.

The enzyme catalyses S-(hydroxymethyl)glutathione = glutathione + formaldehyde. Its pathway is one-carbon metabolism; formaldehyde degradation; formate from formaldehyde (glutathione route): step 1/3. In terms of biological role, catalyzes the condensation of formaldehyde and glutathione to S-hydroxymethylglutathione. This Fusarium vanettenii (strain ATCC MYA-4622 / CBS 123669 / FGSC 9596 / NRRL 45880 / 77-13-4) (Fusarium solani subsp. pisi) protein is Putative glutathione-dependent formaldehyde-activating enzyme.